Reading from the N-terminus, the 599-residue chain is Aspartate--tRNA(Asp/Asn) ligase (599 aa).

Glutamate 180 contacts L-aspartate. The aspartate stretch occupies residues 204–207 (QLLK). Residue arginine 226 participates in L-aspartate binding. Residues 226-228 (RDE) and glutamine 235 each bind ATP. Histidine 457 contacts L-aspartate. Residue glutamate 491 participates in ATP binding. Arginine 498 contributes to the L-aspartate binding site. ATP is bound at residue 543-546 (GWDR). Positions 565–599 (KAGGGRDPLTGAPAPISDEQRAETGVDYDPDADEN) are disordered. Over residues 590-599 (VDYDPDADEN) the composition is skewed to acidic residues.

This sequence belongs to the class-II aminoacyl-tRNA synthetase family. Type 1 subfamily. As to quaternary structure, homodimer.

The protein localises to the cytoplasm. The enzyme catalyses tRNA(Asx) + L-aspartate + ATP = L-aspartyl-tRNA(Asx) + AMP + diphosphate. Its function is as follows. Aspartyl-tRNA synthetase with relaxed tRNA specificity since it is able to aspartylate not only its cognate tRNA(Asp) but also tRNA(Asn). Reaction proceeds in two steps: L-aspartate is first activated by ATP to form Asp-AMP and then transferred to the acceptor end of tRNA(Asp/Asn). This Bifidobacterium longum (strain DJO10A) protein is Aspartate--tRNA(Asp/Asn) ligase.